The sequence spans 213 residues: Glutathione S-transferase (213 aa).

The GST N-terminal domain maps to 4 to 81; that stretch reads AKPILYGAWI…YLEDKYPQHP (78 aa). One can recognise a GST C-terminal domain in the interval 86-211; sequence DIKTKGLDLQ…LPQNQPDAPS (126 aa).

The protein belongs to the GST superfamily. Zeta family.

The protein localises to the cytoplasm. It carries out the reaction RX + glutathione = an S-substituted glutathione + a halide anion + H(+). In terms of biological role, has a glutathione transferase activity with ethacrynic acid and nitrophenyl acetate. Has low glutathione peroxidase activity with cumene hydroperoxide. The sequence is that of Glutathione S-transferase (GSTZ1) from Triticum aestivum (Wheat).